A 419-amino-acid polypeptide reads, in one-letter code: MAVWTLGINHTTAPLDLRGRFAFALDQVEPTLRALRGSLSRQPEAALISTCNRTEIYCAGEKPELEHTLDWLAQTGGVSSSLLRTHSYTLQDDLAARHAFRVASGLDSMVLGETQILGQIKNAVRAAEAAGALGNTLSQLFQRSFAVAKEVRSSTEIGAHSISMAAAAVRLAGQLFEDLGQVKILFVGAGEMIELCATHFAAKSPKAIAIANRSLENGEKLASRFGAEVMRLADLPDRLHEFDAVVSCTASTLPIIGLGAVERALKRRKRRPMFMVDLAVPRDIEIEVKALEDVYLYTVDDLASVVQTAQASRQAAVAQAEAIVDAGVLSFMHWVDQRGSVPLIQQLNAQADEWRAAELARARKLLAKGEDVEAVLEALSKGLTQKMLHGAMTELRASDTAARERASAAIQHFFLRKER.

Substrate contacts are provided by residues Thr50 to Arg53, Ser108, Glu113 to Gln115, and Gln119. The Nucleophile role is filled by Cys51. NADP(+) is bound at residue Gly188–Ile193.

This sequence belongs to the glutamyl-tRNA reductase family. As to quaternary structure, homodimer.

It carries out the reaction (S)-4-amino-5-oxopentanoate + tRNA(Glu) + NADP(+) = L-glutamyl-tRNA(Glu) + NADPH + H(+). The protein operates within porphyrin-containing compound metabolism; protoporphyrin-IX biosynthesis; 5-aminolevulinate from L-glutamyl-tRNA(Glu): step 1/2. Its function is as follows. Catalyzes the NADPH-dependent reduction of glutamyl-tRNA(Glu) to glutamate 1-semialdehyde (GSA). This is Glutamyl-tRNA reductase from Albidiferax ferrireducens (strain ATCC BAA-621 / DSM 15236 / T118) (Rhodoferax ferrireducens).